The sequence spans 175 residues: Lithostathine (175 aa).

Residues 1–26 form the signal peptide; the sequence is MLPSLGLPRLSWMLLSCLMLLSQIQG. The propeptide occupies 27 to 37; the sequence is ENSQKELPSAR. The C-type lectin domain maps to 38–173; the sequence is ISCPSGSMAY…NLNLPYVCKF (136 aa). Disulfide bonds link Cys40–Cys51, Cys68–Cys171, and Cys146–Cys163.

Cleaved to give an A chain and a B chain joined by a disulfide bond. In terms of tissue distribution, in pancreatic acinar cells.

It is found in the secreted. Its function is as follows. Might act as an inhibitor of spontaneous calcium carbonate precipitation. The chain is Lithostathine (PTP) from Bos taurus (Bovine).